The primary structure comprises 468 residues: Argininosuccinate synthase (468 aa).

Residues 10-18 (AYSGGLDTS) and Ala37 each bind ATP. 2 residues coordinate L-citrulline: Tyr90 and Ser95. ATP is bound at residue Gly120. The L-aspartate site is built by Thr122, Asn126, and Asp127. Asn126 lines the L-citrulline pocket. L-citrulline contacts are provided by Arg130, Ser182, Ser191, Glu267, and Tyr279. Low complexity predominate over residues 445 to 457 (PVAAKATAKPVKA). The tract at residues 445 to 468 (PVAAKATAKPVKAPVKKPIAKKKG) is disordered. The segment covering 458–468 (PVKKPIAKKKG) has biased composition (basic residues).

This sequence belongs to the argininosuccinate synthase family. Type 1 subfamily. As to quaternary structure, homotetramer.

Its subcellular location is the cytoplasm. It catalyses the reaction L-citrulline + L-aspartate + ATP = 2-(N(omega)-L-arginino)succinate + AMP + diphosphate + H(+). It functions in the pathway amino-acid biosynthesis; L-arginine biosynthesis; L-arginine from L-ornithine and carbamoyl phosphate: step 2/3. The polypeptide is Argininosuccinate synthase (Dechloromonas aromatica (strain RCB)).